Here is a 428-residue protein sequence, read N- to C-terminus: Glutamate-1-semialdehyde 2,1-aminomutase (428 aa).

K265 bears the N6-(pyridoxal phosphate)lysine mark.

The protein belongs to the class-III pyridoxal-phosphate-dependent aminotransferase family. HemL subfamily. Homodimer. Pyridoxal 5'-phosphate is required as a cofactor.

It localises to the cytoplasm. It carries out the reaction (S)-4-amino-5-oxopentanoate = 5-aminolevulinate. The protein operates within porphyrin-containing compound metabolism; protoporphyrin-IX biosynthesis; 5-aminolevulinate from L-glutamyl-tRNA(Glu): step 2/2. The sequence is that of Glutamate-1-semialdehyde 2,1-aminomutase from Aeromonas hydrophila subsp. hydrophila (strain ATCC 7966 / DSM 30187 / BCRC 13018 / CCUG 14551 / JCM 1027 / KCTC 2358 / NCIMB 9240 / NCTC 8049).